Here is a 256-residue protein sequence, read N- to C-terminus: Omega-amidase YafV (256 aa).

Positions 4–234 constitute a CN hydrolase domain; it reads LKITLLQQPL…ATRIDAELSM (231 aa). The active-site Proton acceptor is Glu-42. Lys-107 serves as the catalytic Proton donor. The active-site Nucleophile is Cys-141.

The protein belongs to the carbon-nitrogen hydrolase superfamily. NIT1/NIT2 family.

The catalysed reaction is a monoamide of a dicarboxylate + H2O = a dicarboxylate + NH4(+). Hydrolyzes alpha-ketoglutaramate (a-KGM) to alpha-ketoglutarate (alpha-KG) and ammonia, has weak activity on L-glutamine, almost no activity on deaminated glutathione (dGSH) and none on glutathione. May function as a metabolite repair enzyme. The polypeptide is Omega-amidase YafV (yafV) (Escherichia coli (strain K12)).